The following is a 203-amino-acid chain: ATP-dependent Clp protease proteolytic subunit 1 (203 aa).

Residue serine 101 is the Nucleophile of the active site. The active site involves histidine 126.

It belongs to the peptidase S14 family. Fourteen ClpP subunits assemble into 2 heptameric rings which stack back to back to give a disk-like structure with a central cavity, resembling the structure of eukaryotic proteasomes.

The protein localises to the cytoplasm. The catalysed reaction is Hydrolysis of proteins to small peptides in the presence of ATP and magnesium. alpha-casein is the usual test substrate. In the absence of ATP, only oligopeptides shorter than five residues are hydrolyzed (such as succinyl-Leu-Tyr-|-NHMec, and Leu-Tyr-Leu-|-Tyr-Trp, in which cleavage of the -Tyr-|-Leu- and -Tyr-|-Trp bonds also occurs).. In terms of biological role, cleaves peptides in various proteins in a process that requires ATP hydrolysis. Has a chymotrypsin-like activity. Plays a major role in the degradation of misfolded proteins. The chain is ATP-dependent Clp protease proteolytic subunit 1 from Synechococcus sp. (strain JA-2-3B'a(2-13)) (Cyanobacteria bacterium Yellowstone B-Prime).